Consider the following 78-residue polypeptide: MCNIVVFLLTLTLFLFSGLSNTAFARVQYEPLKPKFGARVWDQKMIKNIKIEVDGSCSRRAPGRRRPPNRPPKPCTKP.

Residues 1–25 (MCNIVVFLLTLTLFLFSGLSNTAFA) form the signal peptide. Positions 50–64 (KIEVDGSCSRRAPGR) match the SCOOP motif motif. The SxS motif essential for MIK2 binding signature appears at 56-58 (SCS). Residues 57-78 (CSRRAPGRRRPPNRPPKPCTKP) form a disordered region. Residues 69 to 78 (NRPPKPCTKP) show a composition bias toward pro residues.

This sequence belongs to the serine rich endogenous peptide (SCOOP) phytocytokine family. As to quaternary structure, interacts with MIK2 (via extracellular leucine-rich repeat domain); this interaction triggers the formation of complex between MIK2 and the BAK1/SERK3 and SERK4 coreceptors, and subsequent BAK1 activation by phosphorylation.

It localises to the cell membrane. It is found in the secreted. The protein resides in the extracellular space. The protein localises to the apoplast. In terms of biological role, brassicaceae-specific phytocytokine (plant endogenous peptide released into the apoplast) perceived by MIK2 in a BAK1/SERK3 and SERK4 coreceptors-dependent manner, that modulates various physiological and antimicrobial processes including growth prevention and reactive oxygen species (ROS) response regulation. This Arabidopsis thaliana (Mouse-ear cress) protein is Serine rich endogenous peptide 19.